Reading from the N-terminus, the 894-residue chain is Sorting nexin-14 (894 aa).

One can recognise a PXA domain in the interval 78-252 (SSKVDASLSE…LLIIFIDDSP (175 aa)). The 133-residue stretch at 284–416 (ELKQIREQQD…CHSDEYFRQL (133 aa)) folds into the RGS domain. Serine 496 carries the post-translational modification Phosphoserine. Residues 518 to 638 (PYVDFFEDPS…DFLSPNGGET (121 aa)) form the PX domain.

It belongs to the sorting nexin family.

The protein localises to the cytoplasm. Its subcellular location is the cell projection. The protein resides in the dendrite. Plays a role in maintaining normal neuronal excitability and synaptic transmission. May be involved in several stages of intracellular trafficking. The chain is Sorting nexin-14 (SNX14) from Pongo abelii (Sumatran orangutan).